A 148-amino-acid chain; its full sequence is Calmodulin (148 aa).

N-acetylalanine is present on Ala2. EF-hand domains lie at 8 to 43 (DQISEFKEAFSLFDKDGDGCITTKELGTVMRSLGQN), 44 to 79 (PTEAELQDMINEVDRDGNGTIDFPEFLNLMARKMKD), 81 to 116 (DSEEELKEAFRVFDKDQNGFISAAELRHVMTNLGEK), and 116 to 148 (KLTDEVDEMIREADVDGDGQINYEEFVKVMMAK). 14 residues coordinate Ca(2+): Asp21, Asp23, Asp25, Cys27, Glu32, Asp57, Asp59, Asn61, Thr63, Glu68, Asp94, Asp96, Asn98, and Glu105. At Lys116 the chain carries N6,N6,N6-trimethyllysine. Positions 129, 131, 133, 135, and 140 each coordinate Ca(2+).

The protein belongs to the calmodulin family.

Functionally, calmodulin mediates the control of a large number of enzymes, ion channels and other proteins by Ca(2+). Among the enzymes to be stimulated by the calmodulin-Ca(2+) complex are a number of protein kinases and phosphatases. In Fagus sylvatica (Beechnut), this protein is Calmodulin (CAMF1).